The chain runs to 334 residues: Glycerol-1-phosphate dehydrogenase [NAD(P)+] (334 aa).

Residues 77–81 (GRPID) and 99–102 (TTAS) each bind NAD(+). Position 104 (aspartate 104) interacts with substrate. Serine 108 is an NAD(+) binding site. Aspartate 147 serves as a coordination point for substrate. Residues aspartate 147 and histidine 225 each contribute to the Zn(2+) site. Histidine 229 provides a ligand contact to substrate. Histidine 246 contacts Zn(2+).

The protein belongs to the glycerol-1-phosphate dehydrogenase family. The cofactor is Zn(2+).

Its subcellular location is the cytoplasm. It catalyses the reaction sn-glycerol 1-phosphate + NAD(+) = dihydroxyacetone phosphate + NADH + H(+). The catalysed reaction is sn-glycerol 1-phosphate + NADP(+) = dihydroxyacetone phosphate + NADPH + H(+). The protein operates within membrane lipid metabolism; glycerophospholipid metabolism. In terms of biological role, catalyzes the NAD(P)H-dependent reduction of dihydroxyacetonephosphate (DHAP or glycerone phosphate) to glycerol 1-phosphate (G1P). The G1P thus generated is used as the glycerophosphate backbone of phospholipids in the cellular membranes of Archaea. This is Glycerol-1-phosphate dehydrogenase [NAD(P)+] from Methanococcus maripaludis (strain C5 / ATCC BAA-1333).